Here is a 640-residue protein sequence, read N- to C-terminus: MHLSELSHPNELHGLSSSELEDVARQIREKHLKTVSTSGGHLGPGLGVVELTLALYQTLDLDHDRVVWDVGHQAYPHKLITGRFNEFHTLRKKDGVAGYLKRSESSFDHFGAGHASTSISAALGMAIARDRQGQNHKCVAVIGDGALTGGMALEAINHAGHLPKTRLLVVLNDNDMSISPPVGALSNHLNRMRLSPPMQFLTGSAEEAVRHLPFMQGQVPAELNRIKEGMKRLAVPKVGAVFEELGFTYMGPVDGHDIGALVRTFQEAHRSEGPVLVHVATTKGKGYPYAEADQVGYHAQSAFDLTTGKSFPAKKPKPPSYSKVFGQTLVKLCEQDSRIVGITAAMATGTGLDLLQKAVPDQYVDVGIAEQHAVTLAAGMACDGLKPVVAIYSTFLQRAYDQLIHDVGIQKLPVTFVLDRAGIVGADGPTHQGQYDISYLRCVPNFTVMAPKDEAELQRMLVTGLRHNGPIALRIPRGSGEGVPCLEDGWEPLEIGRGELLAEGDDLLIVAYGAMVAPAMATAGLLQEQGIRATVVNARFLRPLDEALLVPLAKRIGRVVTMEEGCLAGGFGAAVMEALHDRDVLVPMLRLGIPDQLVDHASPDESKQALGLTPPQMADRICERFGSAFGDRLQRQTLSV.

Residues His-72 and 113 to 115 (GHA) each bind thiamine diphosphate. Position 144 (Asp-144) interacts with Mg(2+). Residues 145–146 (GA), Asn-174, Tyr-287, and Glu-370 contribute to the thiamine diphosphate site. Asn-174 serves as a coordination point for Mg(2+).

It belongs to the transketolase family. DXPS subfamily. Homodimer. Mg(2+) serves as cofactor. Requires thiamine diphosphate as cofactor.

It carries out the reaction D-glyceraldehyde 3-phosphate + pyruvate + H(+) = 1-deoxy-D-xylulose 5-phosphate + CO2. Its pathway is metabolic intermediate biosynthesis; 1-deoxy-D-xylulose 5-phosphate biosynthesis; 1-deoxy-D-xylulose 5-phosphate from D-glyceraldehyde 3-phosphate and pyruvate: step 1/1. Its function is as follows. Catalyzes the acyloin condensation reaction between C atoms 2 and 3 of pyruvate and glyceraldehyde 3-phosphate to yield 1-deoxy-D-xylulose-5-phosphate (DXP). This chain is 1-deoxy-D-xylulose-5-phosphate synthase, found in Synechococcus sp. (strain RCC307).